Reading from the N-terminus, the 478-residue chain is Adenosylhomocysteinase (478 aa).

Substrate contacts are provided by Thr57, Asp139, and Glu201. Residue 202–204 (TTT) participates in NAD(+) binding. Substrate is bound by residues Lys231 and Asp235. Residues Asn236, 265–270 (GYGDVG), Glu288, Asn323, 344–346 (IGH), and Asn392 each bind NAD(+).

The protein belongs to the adenosylhomocysteinase family. NAD(+) serves as cofactor.

It localises to the cytoplasm. The catalysed reaction is S-adenosyl-L-homocysteine + H2O = L-homocysteine + adenosine. The protein operates within amino-acid biosynthesis; L-homocysteine biosynthesis; L-homocysteine from S-adenosyl-L-homocysteine: step 1/1. Its function is as follows. May play a key role in the regulation of the intracellular concentration of adenosylhomocysteine. In Corynebacterium glutamicum (strain R), this protein is Adenosylhomocysteinase.